Reading from the N-terminus, the 730-residue chain is Catalase-peroxidase (730 aa).

The tract at residues 1-25 is disordered; the sequence is MEEKKCPVTGHTQHTPTGGGTKNKD. A cross-link (tryptophyl-tyrosyl-methioninium (Trp-Tyr) (with M-244)) is located at residues 95-218; sequence WHSAGTYRLN…LAAVQMGLIY (124 aa). The Proton acceptor role is filled by His-96. The segment at residues 218–244 is a cross-link (tryptophyl-tyrosyl-methioninium (Tyr-Met) (with W-95)); sequence YVNPEGPNGQPSVLASGRDVRDTFKRM. His-259 provides a ligand contact to heme b.

The protein belongs to the peroxidase family. Peroxidase/catalase subfamily. As to quaternary structure, homodimer or homotetramer. It depends on heme b as a cofactor. Formation of the three residue Trp-Tyr-Met cross-link is important for the catalase, but not the peroxidase activity of the enzyme.

The catalysed reaction is H2O2 + AH2 = A + 2 H2O. It carries out the reaction 2 H2O2 = O2 + 2 H2O. Functionally, bifunctional enzyme with both catalase and broad-spectrum peroxidase activity. This Desulfitobacterium hafniense (strain Y51) protein is Catalase-peroxidase.